The primary structure comprises 303 residues: MSFTVKVKEELLSLASRDKNELSAMIKMSGSLGLASSGLTLSVTTENAKIARHLYELLSDLYQVKSEIRHHQKTNLRKNRVYTVFLDQKVEEILSDLHLADSFFGIEAGIDQAILTDDEASRAYLRGAFLSNGSMREPDSGKYQLEILSVYLDHAEDLAALMRRFLLDAKTIERKKGAVTYLQRAEDIMDFLIVIGAMEAMAEFESLKLMREARNDLNRANNAETANIARTVTASMKTINNIAKISDNIGIESLPVDLQEVAQLRIQHPDYSIQQLADSLSRPLTKSGVNHRLRKINKIADEL.

The H-T-H motif DNA-binding region spans 272-303 (SIQQLADSLSRPLTKSGVNHRLRKINKIADEL).

The protein belongs to the WhiA family.

Its function is as follows. Involved in cell division and chromosome segregation. In Streptococcus sanguinis (strain SK36), this protein is Probable cell division protein WhiA.